We begin with the raw amino-acid sequence, 302 residues long: Acetylglutamate kinase (302 aa).

Substrate contacts are provided by residues Gly55–Gly56, Arg77, and Asn176.

It belongs to the acetylglutamate kinase family. ArgB subfamily.

It localises to the cytoplasm. The catalysed reaction is N-acetyl-L-glutamate + ATP = N-acetyl-L-glutamyl 5-phosphate + ADP. It functions in the pathway amino-acid biosynthesis; L-arginine biosynthesis; N(2)-acetyl-L-ornithine from L-glutamate: step 2/4. Catalyzes the ATP-dependent phosphorylation of N-acetyl-L-glutamate. The sequence is that of Acetylglutamate kinase from Corynebacterium efficiens (strain DSM 44549 / YS-314 / AJ 12310 / JCM 11189 / NBRC 100395).